The chain runs to 154 residues: 6,7-dimethyl-8-ribityllumazine synthase (154 aa).

5-amino-6-(D-ribitylamino)uracil-binding positions include F22, 56–58 (AFE), and 80–82 (TVI). 85–86 (ST) lines the (2S)-2-hydroxy-3-oxobutyl phosphate pocket. The active-site Proton donor is the H88. F113 contributes to the 5-amino-6-(D-ribitylamino)uracil binding site. Residue R127 participates in (2S)-2-hydroxy-3-oxobutyl phosphate binding.

Belongs to the DMRL synthase family.

It carries out the reaction (2S)-2-hydroxy-3-oxobutyl phosphate + 5-amino-6-(D-ribitylamino)uracil = 6,7-dimethyl-8-(1-D-ribityl)lumazine + phosphate + 2 H2O + H(+). It functions in the pathway cofactor biosynthesis; riboflavin biosynthesis; riboflavin from 2-hydroxy-3-oxobutyl phosphate and 5-amino-6-(D-ribitylamino)uracil: step 1/2. Functionally, catalyzes the formation of 6,7-dimethyl-8-ribityllumazine by condensation of 5-amino-6-(D-ribitylamino)uracil with 3,4-dihydroxy-2-butanone 4-phosphate. This is the penultimate step in the biosynthesis of riboflavin. The sequence is that of 6,7-dimethyl-8-ribityllumazine synthase from Lactococcus lactis subsp. cremoris (strain MG1363).